A 653-amino-acid polypeptide reads, in one-letter code: Acetyl-coenzyme A synthetase (653 aa).

CoA-binding positions include 195 to 198 (RGGK) and Thr314. Residues 390–392 (GEP), 414–419 (DTWWQT), Asp505, and Arg520 each bind ATP. A CoA-binding site is contributed by Ser528. Arg531 provides a ligand contact to ATP. Residues Val542 and Val547 each coordinate Mg(2+). Lys617 bears the N6-acetyllysine mark.

The protein belongs to the ATP-dependent AMP-binding enzyme family. Requires Mg(2+) as cofactor. In terms of processing, acetylated. Deacetylation by the SIR2-homolog deacetylase activates the enzyme.

It carries out the reaction acetate + ATP + CoA = acetyl-CoA + AMP + diphosphate. Its function is as follows. Catalyzes the conversion of acetate into acetyl-CoA (AcCoA), an essential intermediate at the junction of anabolic and catabolic pathways. AcsA undergoes a two-step reaction. In the first half reaction, AcsA combines acetate with ATP to form acetyl-adenylate (AcAMP) intermediate. In the second half reaction, it can then transfer the acetyl group from AcAMP to the sulfhydryl group of CoA, forming the product AcCoA. This Pasteurella multocida (strain Pm70) protein is Acetyl-coenzyme A synthetase.